The following is a 397-amino-acid chain: MSKEKFVREKPHVNVGTIGHVDHGKTTLTAALTKVLSEKYGGEKKAFDQIDNAPEERARGITIATSHVEYQSDKRHYAHVDCPGHADYVKNMITGAAQMDGAILVVSAADGPMPQTREHIVLAKQVGVPNIVVYLNKADMVDDKELLELVEMEVRDLLNSYDFPGDETPIIVGSALKALEGDKSEVGEPSIIKLVETMDTYFPQPERAIDKPFLMPIEDVFSISGRGTVVTGRVERGIIKVGDEIEIVGIKDTTKTTCTGVEMFRKLLDEGQAGDNVGILLRGTKREEVERGQVLAKPGSITPHKKFEAEIYVLSKEEGGRHTPFLQGYRPQFYFRTTDVTGQLLSLPEGIEMVMPGDNVKVTVELIAPVAMDEGLRFAVREGGRTVGAGVVTKIIE.

Residues 10 to 206 enclose the tr-type G domain; the sequence is KPHVNVGTIG…TMDTYFPQPE (197 aa). Positions 19–26 are G1; the sequence is GHVDHGKT. 19-26 is a GTP binding site; that stretch reads GHVDHGKT. Thr26 contacts Mg(2+). The interval 60–64 is G2; sequence GITIA. The tract at residues 81 to 84 is G3; sequence DCPG. GTP is bound by residues 81–85 and 136–139; these read DCPGH and NKAD. Residues 136 to 139 form a G4 region; the sequence is NKAD. The G5 stretch occupies residues 174 to 176; sequence SAL.

The protein belongs to the TRAFAC class translation factor GTPase superfamily. Classic translation factor GTPase family. EF-Tu/EF-1A subfamily. As to quaternary structure, monomer.

Its subcellular location is the cytoplasm. It carries out the reaction GTP + H2O = GDP + phosphate + H(+). In terms of biological role, GTP hydrolase that promotes the GTP-dependent binding of aminoacyl-tRNA to the A-site of ribosomes during protein biosynthesis. In Coxiella burnetii (strain Dugway 5J108-111), this protein is Elongation factor Tu.